Reading from the N-terminus, the 247-residue chain is Serine/threonine-protein phosphatase 2A activator (247 aa).

It belongs to the PTPA-type PPIase family.

It is found in the cytoplasm. It carries out the reaction [protein]-peptidylproline (omega=180) = [protein]-peptidylproline (omega=0). In terms of biological role, PPIases accelerate the folding of proteins. It catalyzes the cis-trans isomerization of proline imidic peptide bonds in oligopeptides. Acts as a regulatory subunit for PP2A-like phosphatases modulating their activity or substrate specificity, probably by inducing a conformational change in the catalytic subunit, a direct target of the PPIase. Can reactivate inactive phosphatase PP2A-phosphatase methylesterase complexes (PP2Ai) in presence of ATP and Mg(2+) by dissociating the inactive form from the complex. This chain is Serine/threonine-protein phosphatase 2A activator, found in Encephalitozoon cuniculi (strain GB-M1) (Microsporidian parasite).